Here is a 553-residue protein sequence, read N- to C-terminus: Formate--tetrahydrofolate ligase (553 aa).

Position 63–70 (63–70) interacts with ATP; the sequence is TPAGEGKT.

Belongs to the formate--tetrahydrofolate ligase family.

The catalysed reaction is (6S)-5,6,7,8-tetrahydrofolate + formate + ATP = (6R)-10-formyltetrahydrofolate + ADP + phosphate. It functions in the pathway one-carbon metabolism; tetrahydrofolate interconversion. The polypeptide is Formate--tetrahydrofolate ligase (Oenococcus oeni (strain ATCC BAA-331 / PSU-1)).